A 453-amino-acid polypeptide reads, in one-letter code: Exopolyphosphatase PRUNE1 (453 aa).

M1 carries the post-translational modification N-acetylmethionine. The Mn(2+) site is built by D28, D30, D106, and D179. A DHH motif motif is present at residues 106–108 (DHH). The interval 393–420 (SLLSGLSQDEEEPPLPPTPMNSLVDECP) is essential for homodimerization. The disordered stretch occupies residues 396–419 (SGLSQDEEEPPLPPTPMNSLVDEC). At S399 the chain carries Phosphoserine. Residue T410 is modified to Phosphothreonine. A Phosphoserine modification is found at S414.

The protein belongs to the PPase class C family. Prune subfamily. In terms of assembly, homooligomer. Able to homodimerize via its C-terminal domain. Interacts with NME1. Interacts with GSK3; at focal adhesion complexes where paxillin and vinculin are colocalized. Requires Mn(2+) as cofactor.

The protein resides in the cytoplasm. It localises to the nucleus. Its subcellular location is the cell junction. The protein localises to the focal adhesion. It catalyses the reaction diphosphate + H2O = 2 phosphate + H(+). Activated by magnesium ions and inhibited by manganese ions. Inhibited by dipyridamole, moderately sensitive to IBMX and inhibited by vinpocetine. Phosphodiesterase (PDE) that has higher activity toward cAMP than cGMP, as substrate. Plays a role in cell proliferation, is able to induce cell motility and acts as a negative regulator of NME1. The polypeptide is Exopolyphosphatase PRUNE1 (PRUNE1) (Bos taurus (Bovine)).